We begin with the raw amino-acid sequence, 181 residues long: Protein canopy homolog 1 (181 aa).

Residues 1 to 21 form the signal peptide; sequence MAILLHFGVLITAFLSSHVEG. The Saposin B-type domain maps to 25–177; it reads PILYCGACRA…EETGLCKEYL (153 aa). Disulfide bonds link Cys29–Cys173, Cys32–Cys166, and Cys87–Cys139. Residues 178–181 carry the Prevents secretion from ER motif; that stretch reads HNEL.

This sequence belongs to the canopy family.

Its subcellular location is the endoplasmic reticulum. Functionally, plays an role in early embryonic development. This chain is Protein canopy homolog 1 (cnpy1), found in Xenopus laevis (African clawed frog).